The sequence spans 821 residues: Leucine--tRNA ligase (821 aa).

The 'HIGH' region signature appears at 44-54 (PYPSGRIHMGH). The short motif at 589 to 593 (KMSKS) is the 'KMSKS' region element. K592 lines the ATP pocket.

The protein belongs to the class-I aminoacyl-tRNA synthetase family.

Its subcellular location is the cytoplasm. The enzyme catalyses tRNA(Leu) + L-leucine + ATP = L-leucyl-tRNA(Leu) + AMP + diphosphate. This Campylobacter concisus (strain 13826) protein is Leucine--tRNA ligase.